A 475-amino-acid chain; its full sequence is Putative response regulator NtrX-like (475 aa).

A Response regulatory domain is found at 5–121 (DVLIVDDEES…KLVILLKRAC (117 aa)). D54 carries the 4-aspartylphosphate modification. A Sigma-54 factor interaction domain is found at 143–369 (LVGGCSVTLK…LRNVVEWTLI (227 aa)). Residues 171 to 178 (GKVGSGKE) and 232 to 241 (ANNGTLYIDE) each bind ATP.

Member of the two-component regulatory system RF_0895/RF_0427. In Rickettsia felis (strain ATCC VR-1525 / URRWXCal2) (Rickettsia azadi), this protein is Putative response regulator NtrX-like.